Reading from the N-terminus, the 60-residue chain is Ixodegrin-Ip (60 aa).

The N-terminal stretch at 1–21 (MNAAFIAALFILGALTLDAMA) is a signal peptide. Residues 49-51 (RGD) carry the Cell attachment site motif.

The protein belongs to the ixodegrin family. Contains 3 disulfide bonds. In terms of tissue distribution, expressed in salivary glands.

Its subcellular location is the secreted. Its function is as follows. Tick salivary platelet aggregation inhibitor that plays an important part in the anti-hemostatic strategy of ticks. Inhibits platelet aggregation induced by ADP, thrombin and thromboxane A2 (TXA2). Blocks platelet adhesion to soluble collagen (most probably through the binding to alpha-2/beta-1 integrin (ITGA2/ITGB1)) and binds to purified glycoprotein IIb/IIIa (ITGA2B/ITGB3) in a dose-dependent manner. In vivo, reduces thrombus weight effectively in a rat arteriovenous shunt model and inhibits thrombosis in a carrageenan-induced mouse tail thrombosis model. This chain is Ixodegrin-Ip, found in Ixodes pacificus (Western black-legged tick).